We begin with the raw amino-acid sequence, 293 residues long: Cytidine deaminase 8 (293 aa).

2 consecutive CMP/dCMP-type deaminase domains span residues 20–151 and 181–293; these read FTPQ…LISQ and EHCN…LHCK. 61-63 is a binding site for substrate; the sequence is NVE. His-74 contributes to the Zn(2+) binding site. Catalysis depends on Glu-76, which acts as the Proton donor. Positions 107 and 110 each coordinate Zn(2+).

Belongs to the cytidine and deoxycytidylate deaminase family. In terms of assembly, homodimer. The cofactor is Zn(2+).

It catalyses the reaction cytidine + H2O + H(+) = uridine + NH4(+). The enzyme catalyses 2'-deoxycytidine + H2O + H(+) = 2'-deoxyuridine + NH4(+). Functionally, this enzyme scavenges exogenous and endogenous cytidine and 2'-deoxycytidine for UMP synthesis. In Arabidopsis thaliana (Mouse-ear cress), this protein is Cytidine deaminase 8 (CDA8).